The chain runs to 500 residues: Cytochrome P450 monooxygenase ausI (500 aa).

The helical transmembrane segment at L8–L28 threads the bilayer. C440 is a heme binding site.

This sequence belongs to the cytochrome P450 family. Requires heme as cofactor.

The protein resides in the membrane. It functions in the pathway secondary metabolite biosynthesis; terpenoid biosynthesis. Functionally, cytochrome P450 monooxygenase; part of the gene cluster B that mediates the biosynthesis of the fungal meroterpenoid acetoxydehydroaustin. The first step of the pathway is the synthesis of 3,5-dimethylorsellinic acid by the polyketide synthase ausA. 3,5-dimethylorsellinic acid is then prenylated by the polyprenyl transferase ausN. Further epoxidation by the FAD-dependent monooxygenase ausM and cyclization by the probable terpene cyclase ausL lead to the formation of protoaustinoid A. Protoaustinoid A is then oxidized to spiro-lactone preaustinoid A3 by the combined action of the FAD-binding monooxygenases ausB and ausC, and the dioxygenase ausE. Acid-catalyzed keto-rearrangement and ring contraction of the tetraketide portion of preaustinoid A3 by ausJ lead to the formation of preaustinoid A4. The aldo-keto reductase ausK, with the help of ausH, is involved in the next step by transforming preaustinoid A4 into isoaustinone which is in turn hydroxylated by the P450 monooxygenase ausI to form austinolide. The cytochrome P450 monooxygenase ausG then modifies austinolide to austinol. Austinol is further acetylated to austin by the O-acetyltransferase ausP, which spontaneously changes to dehydroaustin. The cytochrome P450 monooxygenase then converts dehydroaustin is into 7-dehydrodehydroaustin. The hydroxylation catalyzed by ausR permits the second O-acetyltransferase ausQ to add an additional acetyl group to the molecule, leading to the formation of acetoxydehydroaustin. Due to genetic rearrangements of the clusters and the subsequent loss of some enzymes, the end product of the Penicillium brasilianum austinoid biosynthesis clusters is acetoxydehydroaustin. This chain is Cytochrome P450 monooxygenase ausI, found in Penicillium brasilianum.